The sequence spans 169 residues: Regulator of sigma D (169 aa).

Belongs to the Rsd/AlgQ family. As to quaternary structure, interacts with RpoD.

The protein resides in the cytoplasm. In terms of biological role, binds RpoD and negatively regulates RpoD-mediated transcription activation by preventing the interaction between the primary sigma factor RpoD with the catalytic core of the RNA polymerase and with promoter DNA. May be involved in replacement of the RNA polymerase sigma subunit from RpoD to RpoS during the transition from exponential growth to the stationary phase. The chain is Regulator of sigma D from Yersinia pestis.